We begin with the raw amino-acid sequence, 264 residues long: Putative hydro-lyase Bpet2233 (264 aa).

The protein belongs to the D-glutamate cyclase family.

The protein is Putative hydro-lyase Bpet2233 of Bordetella petrii (strain ATCC BAA-461 / DSM 12804 / CCUG 43448).